The chain runs to 583 residues: MKRSMYAGRVRSEHIGTSITLKGWVGRRRDLGGLIFIDLRDREGIMQLVINPEEVSASVMATAESLRSEFVIEVSGVVTAREQANDNLPTGEVELKVQELSVLNTSKTTPFEIKDGIEANDDTRMRYRYLDLRRPEMLENFKLRAKVTHSIRNYLDNLEFIDVETPMLTKSTPEGARDYLVPSRVNQGHFYALPQSPQITKQLLMNAGFDRYYQIVKCFRDEDLRGDRQPEFTQVDLETSFLSDQEIQDIVEGMIAKVMKDTKGLEVSLPFPRMAYDDAMNNYGSDKPDTRFDMLLQDLTEVVKEVDFKVFSEASVVKAIVVKNKADKYSRKNIDKLTEIAKQYGAKGLAWLKYADNTISGPVAKFLTAIEDRLTEALQLENNDLILFVADSLEVANETLGALRTRIAKELELIDYSKFNFLWIVDWPMFEWSEEEGRYMSAHHPFTLPTAETAHELEGDLAKVRAVAYDIVLNGYELGGGSLRINQKDTQERMFKALGFSAESAQEQFGFLLEAMDYGFPPHGGLAIGLDRFVMLLAGKDNIREVIAFPKNNKASDPMTQAPSLVSEQQLEELSLTVESYEN.

Position 174 (Glu174) interacts with L-aspartate. The aspartate stretch occupies residues 198-201 (QITK). Arg220 provides a ligand contact to L-aspartate. ATP-binding positions include 220-222 (RDE) and Gln229. An L-aspartate-binding site is contributed by His443. Position 477 (Glu477) interacts with ATP. Arg484 serves as a coordination point for L-aspartate. 529-532 (GLDR) serves as a coordination point for ATP.

The protein belongs to the class-II aminoacyl-tRNA synthetase family. Type 1 subfamily. Homodimer.

Its subcellular location is the cytoplasm. The enzyme catalyses tRNA(Asp) + L-aspartate + ATP = L-aspartyl-tRNA(Asp) + AMP + diphosphate. Functionally, catalyzes the attachment of L-aspartate to tRNA(Asp) in a two-step reaction: L-aspartate is first activated by ATP to form Asp-AMP and then transferred to the acceptor end of tRNA(Asp). This is Aspartate--tRNA ligase from Streptococcus agalactiae serotype Ia (strain ATCC 27591 / A909 / CDC SS700).